The chain runs to 282 residues: Putative 4-diphosphocytidyl-2-C-methyl-D-erythritol kinase (282 aa).

The active site involves K10. Residue 94–104 participates in ATP binding; that stretch reads PICAGLGGGSS. The active site involves D136.

This sequence belongs to the GHMP kinase family. IspE subfamily.

The catalysed reaction is 4-CDP-2-C-methyl-D-erythritol + ATP = 4-CDP-2-C-methyl-D-erythritol 2-phosphate + ADP + H(+). Functionally, catalyzes the phosphorylation of the position 2 hydroxy group of 4-diphosphocytidyl-2C-methyl-D-erythritol. The sequence is that of Putative 4-diphosphocytidyl-2-C-methyl-D-erythritol kinase (ipk) from Streptococcus mutans serotype c (strain ATCC 700610 / UA159).